The primary structure comprises 212 residues: uncharacterized protein (212 aa).

A helical transmembrane segment spans residues 11-31 (NLIFFQFIVYFFFISLTILII).

The protein resides in the membrane. This is an uncharacterized protein from Rickettsia prowazekii (strain Madrid E).